The primary structure comprises 706 residues: Coiled-coil domain-containing protein 177 (706 aa).

Residues 1-11 are compositionally biased toward acidic residues; sequence MVDPVPEEEKE. 3 disordered regions span residues 1-63, 179-262, and 268-287; these read MVDP…GGRR, ASAL…LREL, and ASAR…NPLG. Composition is skewed to low complexity over residues 28 to 49 and 179 to 209; these read PPDA…AAAP and ASAL…RRTS. Residues 210-221 show a composition bias toward pro residues; sequence PSPPARSRPPPA. Low complexity predominate over residues 242 to 257; the sequence is ALSSESGASSSSYSGE. The residue at position 310 (Ser-310) is a Phosphoserine. Residues 360 to 624 are a coiled coil; that stretch reads AAHGQWEQQR…QTRLEKERAQ (265 aa). 4 disordered regions span residues 364-386, 398-425, 448-580, and 651-706; these read QWEQ…KQRA, VEER…RSEE, DDRL…EREH, and ERSE…LDRK. Residues 368 to 386 are compositionally biased toward basic and acidic residues; that stretch reads QRVRAEQRREREEREKQRA. Composition is skewed to basic and acidic residues over residues 448-529, 548-580, and 651-663; these read DDRL…REGL, QEQR…EREH, and ERSE…RRSA. The segment covering 664–674 has biased composition (low complexity); the sequence is LESARSTARAS. Residues 676 to 706 are compositionally biased toward basic and acidic residues; the sequence is HVREKVREETNTRSFDRMVREAQLHASLDRK.

The sequence is that of Coiled-coil domain-containing protein 177 (Ccdc177) from Mus musculus (Mouse).